Consider the following 581-residue polypeptide: 2-succinyl-5-enolpyruvyl-6-hydroxy-3-cyclohexene-1-carboxylate synthase (581 aa).

Belongs to the TPP enzyme family. MenD subfamily. As to quaternary structure, homodimer. The cofactor is Mg(2+). Mn(2+) is required as a cofactor. Requires thiamine diphosphate as cofactor.

The enzyme catalyses isochorismate + 2-oxoglutarate + H(+) = 5-enolpyruvoyl-6-hydroxy-2-succinyl-cyclohex-3-ene-1-carboxylate + CO2. It functions in the pathway quinol/quinone metabolism; 1,4-dihydroxy-2-naphthoate biosynthesis; 1,4-dihydroxy-2-naphthoate from chorismate: step 2/7. Its pathway is quinol/quinone metabolism; menaquinone biosynthesis. Catalyzes the thiamine diphosphate-dependent decarboxylation of 2-oxoglutarate and the subsequent addition of the resulting succinic semialdehyde-thiamine pyrophosphate anion to isochorismate to yield 2-succinyl-5-enolpyruvyl-6-hydroxy-3-cyclohexene-1-carboxylate (SEPHCHC). The chain is 2-succinyl-5-enolpyruvyl-6-hydroxy-3-cyclohexene-1-carboxylate synthase from Psychromonas ingrahamii (strain DSM 17664 / CCUG 51855 / 37).